Consider the following 67-residue polypeptide: Beta-defensin 123 (67 aa).

Residues 1 to 20 (MKLLLLTLTVLLLLSQLTPG) form the signal peptide. 3 cysteine pairs are disulfide-bonded: C25–C52, C32–C46, and C36–C53.

This sequence belongs to the beta-defensin family.

The protein localises to the secreted. In terms of biological role, has antibacterial activity. The protein is Beta-defensin 123 (DEFB123) of Gorilla gorilla gorilla (Western lowland gorilla).